A 363-amino-acid polypeptide reads, in one-letter code: NAD(P)H-quinone oxidoreductase subunit 1, chloroplastic (363 aa).

A run of 8 helical transmembrane segments spans residues 30–50 (LFPI…IVWL), 98–118 (FSIG…VIPF), 127–147 (LSIG…GLLM), 165–185 (AAQS…ISLL), 203–223 (FWGW…ISSL), 248–268 (YSGI…LVSS), 300–320 (VFGT…FLFI), and 336–356 (LLNL…LLTT).

The protein belongs to the complex I subunit 1 family. NDH is composed of at least 16 different subunits, 5 of which are encoded in the nucleus.

The protein resides in the plastid. Its subcellular location is the chloroplast thylakoid membrane. It catalyses the reaction a plastoquinone + NADH + (n+1) H(+)(in) = a plastoquinol + NAD(+) + n H(+)(out). The catalysed reaction is a plastoquinone + NADPH + (n+1) H(+)(in) = a plastoquinol + NADP(+) + n H(+)(out). Its function is as follows. NDH shuttles electrons from NAD(P)H:plastoquinone, via FMN and iron-sulfur (Fe-S) centers, to quinones in the photosynthetic chain and possibly in a chloroplast respiratory chain. The immediate electron acceptor for the enzyme in this species is believed to be plastoquinone. Couples the redox reaction to proton translocation, and thus conserves the redox energy in a proton gradient. The sequence is that of NAD(P)H-quinone oxidoreductase subunit 1, chloroplastic from Nicotiana tomentosiformis (Tobacco).